Here is a 206-residue protein sequence, read N- to C-terminus: Ribonuclease HII (206 aa).

One can recognise an RNase H type-2 domain in the interval 19-206; sequence ALIAGVDEVG…GPVKRALGIE (188 aa). Residues Asp25, Glu26, and Asp117 each coordinate a divalent metal cation.

This sequence belongs to the RNase HII family. Mn(2+) serves as cofactor. The cofactor is Mg(2+).

It localises to the cytoplasm. The enzyme catalyses Endonucleolytic cleavage to 5'-phosphomonoester.. Endonuclease that specifically degrades the RNA of RNA-DNA hybrids. This is Ribonuclease HII from Vibrio cholerae serotype O1 (strain M66-2).